A 175-amino-acid chain; its full sequence is Tumor necrosis factor receptor superfamily member 13C (175 aa).

At 1 to 71 the chain is on the extracellular side; it reads MGARRLRVRS…EGSALRPDVA (71 aa). The TNFR-Cys; truncated repeat unit spans residues 21 to 38; it reads QCNQTECFDPLVRNCVSC. 2 cysteine pairs are disulfide-bonded: Cys22–Cys35 and Cys27–Cys38. Asn23 carries N-linked (GlcNAc...) asparagine glycosylation. Residues 29-34 form an essential for TNFSF13B/TALL1/BAFF/BLyS binding region; the sequence is DPLVRN. Residues 72–92 traverse the membrane as a helical; Signal-anchor for type III membrane protein segment; sequence LLVGAPALLGLILALTLVGLV. The Cytoplasmic segment spans residues 93-175; that stretch reads SLVSWRWRQQ…VTTKTAGPEQ (83 aa). The tract at residues 124-175 is disordered; the sequence is VPSSETPHASAPTWPPLKEDADSALPRHSVPVPATELGSTELVTTKTAGPEQ. Polar residues predominate over residues 160 to 175; the sequence is LGSTELVTTKTAGPEQ.

In terms of tissue distribution, highly expressed in spleen and testis; detected at lower levels in lung and thymus.

Its subcellular location is the membrane. Its function is as follows. B-cell receptor specific for TNFSF13B/TALL1/BAFF/BLyS. Promotes the survival of mature B-cells and the B-cell response. In Mus musculus (Mouse), this protein is Tumor necrosis factor receptor superfamily member 13C (Tnfrsf13c).